The chain runs to 469 residues: Putative dipeptidase SH1171 (469 aa).

Position 84 (His84) interacts with Zn(2+). Asp86 is a catalytic residue. Zn(2+) is bound at residue Asp115. The active-site Proton acceptor is the Glu149. Zn(2+) is bound by residues Glu150, Asp173, and His440.

Belongs to the peptidase M20A family. Zn(2+) serves as cofactor.

This chain is Putative dipeptidase SH1171, found in Staphylococcus haemolyticus (strain JCSC1435).